A 719-amino-acid chain; its full sequence is Polyribonucleotide nucleotidyltransferase (719 aa).

Positions 491 and 497 each coordinate Mg(2+). Residues Pro-558 to Ile-617 form the KH domain. One can recognise an S1 motif domain in the interval Gly-627–Lys-695.

Belongs to the polyribonucleotide nucleotidyltransferase family. Requires Mg(2+) as cofactor.

It is found in the cytoplasm. It carries out the reaction RNA(n+1) + phosphate = RNA(n) + a ribonucleoside 5'-diphosphate. Involved in mRNA degradation. Catalyzes the phosphorolysis of single-stranded polyribonucleotides processively in the 3'- to 5'-direction. The polypeptide is Polyribonucleotide nucleotidyltransferase (Bordetella parapertussis (strain 12822 / ATCC BAA-587 / NCTC 13253)).